Here is a 591-residue protein sequence, read N- to C-terminus: Acyl-CoA-dependent acyltransferase MAC1 (591 aa).

The tract at residues 589 to 591 (ARL) is peroxisomal targeting signal type 1.

The protein belongs to the trichothecene O-acetyltransferase family.

Its subcellular location is the peroxisome. The protein operates within secondary metabolite biosynthesis. Acyl-CoA-dependent acyltransferase; part of the gene cluster that mediates the biosynthesis of mannosylerythritol lipids (MELs), surface-active substances that enhance the availability of water-insoluble substrates. Mannosylerythritol lipid production is responsible for hemolytic activity of Ustilago maydis. Depending on the number of acetyl groups, mannosylerythritol lipids can be differentiated into MEL A (fully acetylated), MEL B and MEL C (monoacetylated at R-6 and R-4, respectively), and the fully deacetylated MEL D. The first step in the pathway is the generation of mannosylerythritol by the glycosyltransferase EMT1 which catalyzes the transfer of GDP-mannose to the C-4 atom of meso-erythritol. This reaction has to be stereospecific, since only mannosyl-D-erythritol is generated. The produced disaccharide is subsequently acylated with fatty acids of various lengths derived from the peroxisomal beta-oxidation by the peroxisomal acyltransferases MAC1 and MAC2 at positions C-2 and C-3, repectively. The existence of MEL derivatives which carry an acetyl group at C-2 implies that at least MAC1 also accepts acetyl-CoA as a donor. The final step of MEL biosynthesis is the acetylation of the fully acylated mannosylerythritol lipids catalyzed by the acetyl-CoA-dependent acetyltransferase MAT1. MAT1 displays a relaxed regioselectivity and is able to transfer acetylgroups to both positions C-4 and C-6 of the mannosyl moiety. The polypeptide is Acyl-CoA-dependent acyltransferase MAC1 (Mycosarcoma maydis (Corn smut fungus)).